Consider the following 334-residue polypeptide: Thioredoxin reductase (334 aa).

FAD-binding positions include 11–14 (SGAG), 40–41 (TA), glutamine 45, asparagine 54, cysteine 148, aspartate 294, and 301–303 (RQA). Cysteine 145 and cysteine 148 are disulfide-bonded.

Belongs to the class-II pyridine nucleotide-disulfide oxidoreductase family. Homodimer. The cofactor is FAD.

It carries out the reaction [thioredoxin]-dithiol + NADP(+) = [thioredoxin]-disulfide + NADPH + H(+). Its function is as follows. Component of the thioredoxin-thioredoxin reductase system which may be involved in biosynthesis of penicillins and cephalosporins and may be important in determining the thiol-disulfide redox balance. The polypeptide is Thioredoxin reductase (TRR1) (Penicillium chrysogenum (Penicillium notatum)).